A 108-amino-acid polypeptide reads, in one-letter code: Ig kappa chain V-V region HP 93G7 (108 aa).

The framework-1 stretch occupies residues 1–23; that stretch reads DIQMTQTTSSLSASLGDRVTISC. C23 and C88 are joined by a disulfide. The segment at 24 to 34 is complementarity-determining-1; that stretch reads RASQDISNYLN. The segment at 35–49 is framework-2; it reads WYQQKPDGTVKLLIY. The complementarity-determining-2 stretch occupies residues 50–56; the sequence is YTSRLHS. Residues 57–88 are framework-3; sequence GVPSRFSGSGSGTDYSLTISNLEQEDIATYFC. The complementarity-determining-3 stretch occupies residues 89–97; that stretch reads QQGNMLPRT. Positions 98-108 are framework-4; sequence FGGGTKLEIKR.

The protein is Ig kappa chain V-V region HP 93G7 of Mus musculus (Mouse).